The following is a 658-amino-acid chain: Threonine--tRNA ligase (658 aa).

In terms of domain architecture, TGS spans 1–61; it reads MSDVRVTVQR…AAGDVVEPIT (61 aa). Positions 259–554 are catalytic; it reads DHRRLGAELD…LLEHYAGALP (296 aa). Residues cysteine 353, histidine 404, and histidine 531 each coordinate Zn(2+).

The protein belongs to the class-II aminoacyl-tRNA synthetase family. As to quaternary structure, homodimer. The cofactor is Zn(2+).

The protein resides in the cytoplasm. It carries out the reaction tRNA(Thr) + L-threonine + ATP = L-threonyl-tRNA(Thr) + AMP + diphosphate + H(+). Its function is as follows. Catalyzes the attachment of threonine to tRNA(Thr) in a two-step reaction: L-threonine is first activated by ATP to form Thr-AMP and then transferred to the acceptor end of tRNA(Thr). Also edits incorrectly charged L-seryl-tRNA(Thr). The polypeptide is Threonine--tRNA ligase (Parafrankia sp. (strain EAN1pec)).